A 189-amino-acid chain; its full sequence is Apolipoprotein D (189 aa).

The N-terminal stretch at 1–20 (MVTMLMFLATLAGLFTTAKG) is a signal peptide. Pyrrolidone carboxylic acid is present on glutamine 21. 2 cysteine pairs are disulfide-bonded: cysteine 28-cysteine 134 and cysteine 61-cysteine 185. N-linked (GlcNAc...) asparagine glycosylation is found at asparagine 65 and asparagine 98.

It belongs to the calycin superfamily. Lipocalin family. In terms of assembly, homodimer. As to expression, highest levels of expression in brain, testis, virgin mammary gland and salivary gland. Moderate levels in skeletal muscle, lactating mammary gland and thymus. Low levels in lung and lymph node. No expression in kidney, pancreas, liver or spleen.

The protein resides in the secreted. In terms of biological role, APOD occurs in the macromolecular complex with lecithin-transport and binding of bilin. Appears to be able to transport a variety of ligands in a number of different contexts. In Mus musculus (Mouse), this protein is Apolipoprotein D (Apod).